We begin with the raw amino-acid sequence, 188 residues long: Protein ORFV073 (188 aa).

As to quaternary structure, interacts with host IKBKG; this interaction inhibits host NF-kappa-B pathway activation.

Its subcellular location is the host nucleus. It is found in the host cytoplasm. The protein resides in the host perinuclear region. The protein localises to the virion. Plays a role in the inhibition of the host NF-kappa-B pathway early during infection. Prevents the host RELA subunit from reaching the nucleus and activate transcription. In Capra hircus (Goat), this protein is Protein ORFV073.